Reading from the N-terminus, the 1011-residue chain is PE-PGRS family protein PE_PGRS30 (1011 aa).

The PE domain occupies 1–93 (MSFLLVEPDL…AAAYTGAEAA (93 aa)). Residues 130 to 696 (SNAGGNGGPG…GGTGGTGGVL (567 aa)) are PGRS domain. The segment covering 595–696 (GGAGGTGGDH…GGTGGTGGVL (102 aa)) has biased composition (gly residues). Residues 595–701 (GGAGGTGGDH…TGGVLFGQSG (107 aa)) are disordered. Residues 697-1011 (FGQSGSSGPP…PTQLAQAIAP (315 aa)) form a C-terminal domain region.

It belongs to the mycobacterial PE family. PGRS subfamily.

Its subcellular location is the secreted. The protein localises to the cell wall. It is found in the cell surface. In terms of biological role, mediates suppression of pro-inflammatory immune response in macrophages via modulation of host cytokine response. Required for full virulence. Involved in inhibition of phago-lysosome fusion. This Mycobacterium tuberculosis (strain ATCC 25618 / H37Rv) protein is PE-PGRS family protein PE_PGRS30.